The following is a 109-amino-acid chain: Small ribosomal subunit protein eS25 (109 aa).

Residues 1 to 13 show a composition bias toward basic and acidic residues; the sequence is MVKKIQESKEKKA. Residues 1–34 are disordered; it reads MVKKIQESKEKKALKAASGTRKDKKKWGDGRKKE.

It belongs to the eukaryotic ribosomal protein eS25 family.

This Encephalitozoon cuniculi (strain GB-M1) (Microsporidian parasite) protein is Small ribosomal subunit protein eS25 (RPS25-1).